Consider the following 397-residue polypeptide: Aurora kinase A (397 aa).

Residues 1–118 are disordered; that stretch reads MDRCKENCVS…SIQKTEDSKK (118 aa). Polar residues-rich tracts occupy residues 29–55 and 84–102; these read QIPS…SQRV and RLSN…SGNN. Ser40 and Ser50 each carry phosphoserine. The span at 103–118 shows a compositional bias: basic and acidic residues; it reads SEKEQTSIQKTEDSKK. Residues 126–376 enclose the Protein kinase domain; that stretch reads FDIGRPLGKG…LAEVLEHPWI (251 aa). ATP-binding positions include Lys136, Lys155, and 203 to 206; that span reads LEYA. Catalysis depends on Asp249, which acts as the Proton acceptor. Lys251 participates in a covalent cross-link: Glycyl lysine isopeptide (Lys-Gly) (interchain with G-Cter in SUMO2). ATP is bound by residues 253–254 and Asp267; that span reads EN. The tract at residues 273–286 is activation segment; sequence HAPSSRRTTLCGTL. Residues Thr280 and Thr281 each carry the phosphothreonine modification. A Phosphoserine; by PKA and PAK modification is found at Ser335. A compositionally biased stretch (polar residues) spans 378–387; sequence ANSSKPPTGH. Residues 378-397 are disordered; sequence ANSSKPPTGHNSKEATSKSS. The span at 388 to 397 shows a compositional bias: basic and acidic residues; sequence NSKEATSKSS.

This sequence belongs to the protein kinase superfamily. Ser/Thr protein kinase family. Aurora subfamily. As to quaternary structure, part of a complex composed of NEDD9, AURKA and CTTN; within the complex NEDD9 acts as a scaffold protein and is required for complex formation. Identified in a complex with AUNIP and NIN. Interacts with CPEB1, JTB, TACC1, TPX2, PPP2CA, as well as with the protein phosphatase type 1 (PP1) isoforms PPP1CA, PPP1CB and PPP1CC. Also interacts with its substrates ARHGEF2, BORA, KIF2A, PARD3, and p53/TP53. Interaction with BORA promotes phosphorylation of PLK1. Interacts with FBXL7 and CIMAP3. Interacts with GADD45A, competing with its oligomerization. Interacts (via C-terminus) with AUNIP (via C-terminus). Interacts with SIRT2. Interacts with FRY; this interaction facilitates AURKA-mediated PLK1 phosphorylation. Interacts with MYCN; interaction is phospho-independent and triggers AURKA activation; AURKA competes with FBXW7 for binding to unphosphorylated MYCN but not for binding to phosphorylated MYCN. Interacts with HNRNPU. Interacts with AAAS. Interacts with KLHL18 and CUL3. Interacts with FOXP1. Interacts with HDAC6; AURKA-mediated phosphorylation of HDAC6 promotes deacetylation of alpha-tubulin. In terms of processing, activated by phosphorylation at Thr-281; this brings about a change in the conformation of the activation segment. Phosphorylation at Thr-281 varies during the cell cycle and is highest during M phase. Autophosphorylated at Thr-281 upon TPX2 binding. Thr-281 can be phosphorylated by several kinases, including PAK and PKA. Protein phosphatase type 1 (PP1) binds AURKA and inhibits its activity by dephosphorylating Thr-281 during mitosis. Phosphorylation at Ser-335 decreases the kinase activity. PPP2CA controls degradation by dephosphorylating Ser-52 at the end of mitosis. Phosphorylated in embryonic brain neurons. Post-translationally, ubiquitinated by CHFR, leading to its degradation by the proteasome. Ubiquitinated by the anaphase-promoting complex (APC), leading to its degradation by the proteasome. Ubiquitinated by the E3 ubiquitin-protein ligase complex SCF(FBXL7) during mitosis, leading to its degradation by the proteasome. Ubiquitinated by the CUL3-KLHL18 ligase leading to its activation at the centrosome which is required for initiating mitotic entry. Ubiquitination mediated by CUL3-KLHL18 ligase does not lead to its degradation by the proteasome. Detected in neurons in brain cortex and hippocampus (at protein level). Expressed in mammary gland and tumor.

The protein localises to the cytoplasm. It is found in the cytoskeleton. Its subcellular location is the microtubule organizing center. The protein resides in the centrosome. It localises to the spindle pole. The protein localises to the centriole. It is found in the cell projection. Its subcellular location is the neuron projection. The protein resides in the cilium. It localises to the cilium basal body. The protein localises to the basolateral cell membrane. It carries out the reaction L-seryl-[protein] + ATP = O-phospho-L-seryl-[protein] + ADP + H(+). The catalysed reaction is L-threonyl-[protein] + ATP = O-phospho-L-threonyl-[protein] + ADP + H(+). Activation of CDK1, appears to be an upstream event of AURKA activation. Phosphatase inhibitor-2 (PPP1R2) and TPX2 act also as activators. Inactivated by the G2 checkpoint. Inhibited by GADD45A and p53/TP53, and through dephosphorylation by protein phosphatase type 1 (PP1). MLN8054 is also a potent and selective inhibitor. Activated during the early phase of cilia disassembly in the presence of FBXL7 and CIMAP3. Inhibited by the small molecule inhibitor VX-680. Functionally, mitotic serine/threonine kinase that contributes to the regulation of cell cycle progression. Associates with the centrosome and the spindle microtubules during mitosis and plays a critical role in various mitotic events including the establishment of mitotic spindle, centrosome duplication, centrosome separation as well as maturation, chromosomal alignment, spindle assembly checkpoint, and cytokinesis. Required for normal spindle positioning during mitosis and for the localization of NUMA1 and DCTN1 to the cell cortex during metaphase. Required for initial activation of CDK1 at centrosomes. Phosphorylates numerous target proteins, including ARHGEF2, BORA, BRCA1, CDC25B, DLGP5, HDAC6, KIF2A, LATS2, NDEL1, PARD3, PPP1R2, PLK1, RASSF1, TACC3, p53/TP53 and TPX2. Phosphorylates MCRS1 which is required for MCRS1-mediated kinetochore fiber assembly and mitotic progression. Regulates KIF2A tubulin depolymerase activity. Required for normal axon formation. Plays a role in microtubule remodeling during neurite extension. Important for microtubule formation and/or stabilization. Also acts as a key regulatory component of the p53/TP53 pathway, and particularly the checkpoint-response pathways critical for oncogenic transformation of cells, by phosphorylating and stabilizating p53/TP53. Phosphorylates its own inhibitors, the protein phosphatase type 1 (PP1) isoforms, to inhibit their activity. Inhibits cilia outgrowth. Required for cilia disassembly via phosphorylation of HDAC6 and subsequent deacetylation of alpha-tubulin. Regulates protein levels of the anti-apoptosis protein BIRC5 by suppressing the expression of the SCF(FBXL7) E3 ubiquitin-protein ligase substrate adapter FBXL7 through the phosphorylation of the transcription factor FOXP1. This is Aurora kinase A from Rattus norvegicus (Rat).